The chain runs to 98 residues: NADH-ubiquinone oxidoreductase chain 4L (98 aa).

3 helical membrane passes run 1–21 (MPSI…GVLI), 26–46 (LMSS…LVSL), and 61–81 (IILL…LVMV).

The protein belongs to the complex I subunit 4L family. In terms of assembly, core subunit of respiratory chain NADH dehydrogenase (Complex I) which is composed of 45 different subunits.

The protein localises to the mitochondrion inner membrane. The catalysed reaction is a ubiquinone + NADH + 5 H(+)(in) = a ubiquinol + NAD(+) + 4 H(+)(out). Its function is as follows. Core subunit of the mitochondrial membrane respiratory chain NADH dehydrogenase (Complex I) which catalyzes electron transfer from NADH through the respiratory chain, using ubiquinone as an electron acceptor. Part of the enzyme membrane arm which is embedded in the lipid bilayer and involved in proton translocation. The chain is NADH-ubiquinone oxidoreductase chain 4L (MT-ND4L) from Galago senegalensis (Northern lesser bushbaby).